Here is a 339-residue protein sequence, read N- to C-terminus: Ketol-acid reductoisomerase (NADP(+)) (339 aa).

One can recognise a KARI N-terminal Rossmann domain in the interval 1-182; the sequence is MKVYYDADCD…GGGRSGIIET (182 aa). NADP(+) is bound by residues 24–27, Arg-48, Ser-51, Ser-53, and 83–86; these read YGSQ and DEHQ. The active site involves His-108. Position 134 (Gly-134) interacts with NADP(+). The region spanning 183–328 is the KARI C-terminal knotted domain; it reads NFREECETDL…AKLRAMMPWI (146 aa). Mg(2+)-binding residues include Asp-191, Glu-195, Glu-227, and Glu-231. Ser-252 contacts substrate.

Belongs to the ketol-acid reductoisomerase family. The cofactor is Mg(2+).

The catalysed reaction is (2R)-2,3-dihydroxy-3-methylbutanoate + NADP(+) = (2S)-2-acetolactate + NADPH + H(+). The enzyme catalyses (2R,3R)-2,3-dihydroxy-3-methylpentanoate + NADP(+) = (S)-2-ethyl-2-hydroxy-3-oxobutanoate + NADPH + H(+). It participates in amino-acid biosynthesis; L-isoleucine biosynthesis; L-isoleucine from 2-oxobutanoate: step 2/4. Its pathway is amino-acid biosynthesis; L-valine biosynthesis; L-valine from pyruvate: step 2/4. Its function is as follows. Involved in the biosynthesis of branched-chain amino acids (BCAA). Catalyzes an alkyl-migration followed by a ketol-acid reduction of (S)-2-acetolactate (S2AL) to yield (R)-2,3-dihydroxy-isovalerate. In the isomerase reaction, S2AL is rearranged via a Mg-dependent methyl migration to produce 3-hydroxy-3-methyl-2-ketobutyrate (HMKB). In the reductase reaction, this 2-ketoacid undergoes a metal-dependent reduction by NADPH to yield (R)-2,3-dihydroxy-isovalerate. The polypeptide is Ketol-acid reductoisomerase (NADP(+)) (Novosphingobium aromaticivorans (strain ATCC 700278 / DSM 12444 / CCUG 56034 / CIP 105152 / NBRC 16084 / F199)).